Reading from the N-terminus, the 94-residue chain is Large ribosomal subunit protein bL28 (94 aa).

It belongs to the bacterial ribosomal protein bL28 family.

This Novosphingobium aromaticivorans (strain ATCC 700278 / DSM 12444 / CCUG 56034 / CIP 105152 / NBRC 16084 / F199) protein is Large ribosomal subunit protein bL28.